A 468-amino-acid chain; its full sequence is Ribulose bisphosphate carboxylase large chain (468 aa).

K5 is subject to N6,N6,N6-trimethyllysine. Residues N114 and T164 each coordinate substrate. The active-site Proton acceptor is the K166. K168 serves as a coordination point for substrate. Mg(2+) is bound by residues K192, D194, and E195. K192 carries the N6-carboxylysine modification. Residue H285 is the Proton acceptor of the active site. Residues R286, H318, and S370 each contribute to the substrate site.

This sequence belongs to the RuBisCO large chain family. Type I subfamily. In terms of assembly, heterohexadecamer of 8 large chains and 8 small chains; disulfide-linked. The disulfide link is formed within the large subunit homodimers. It depends on Mg(2+) as a cofactor. In terms of processing, the disulfide bond which can form in the large chain dimeric partners within the hexadecamer appears to be associated with oxidative stress and protein turnover.

It localises to the plastid. The protein resides in the chloroplast. The enzyme catalyses 2 (2R)-3-phosphoglycerate + 2 H(+) = D-ribulose 1,5-bisphosphate + CO2 + H2O. It catalyses the reaction D-ribulose 1,5-bisphosphate + O2 = 2-phosphoglycolate + (2R)-3-phosphoglycerate + 2 H(+). Its function is as follows. RuBisCO catalyzes two reactions: the carboxylation of D-ribulose 1,5-bisphosphate, the primary event in carbon dioxide fixation, as well as the oxidative fragmentation of the pentose substrate in the photorespiration process. Both reactions occur simultaneously and in competition at the same active site. The polypeptide is Ribulose bisphosphate carboxylase large chain (Nolana spathulata (Chilean bell flower)).